Here is a 438-residue protein sequence, read N- to C-terminus: Serine hydroxymethyltransferase 1 (438 aa).

(6S)-5,6,7,8-tetrahydrofolate contacts are provided by residues Leu130 and 134-136 (GHL). The residue at position 239 (Lys239) is an N6-(pyridoxal phosphate)lysine.

Belongs to the SHMT family. As to quaternary structure, homodimer. Pyridoxal 5'-phosphate serves as cofactor.

It is found in the cytoplasm. It catalyses the reaction (6R)-5,10-methylene-5,6,7,8-tetrahydrofolate + glycine + H2O = (6S)-5,6,7,8-tetrahydrofolate + L-serine. The protein operates within one-carbon metabolism; tetrahydrofolate interconversion. It functions in the pathway amino-acid biosynthesis; glycine biosynthesis; glycine from L-serine: step 1/1. Functionally, catalyzes the reversible interconversion of serine and glycine with tetrahydrofolate (THF) serving as the one-carbon carrier. This reaction serves as the major source of one-carbon groups required for the biosynthesis of purines, thymidylate, methionine, and other important biomolecules. Also exhibits THF-independent aldolase activity toward beta-hydroxyamino acids, producing glycine and aldehydes, via a retro-aldol mechanism. Thus, is able to catalyze the cleavage of L-allo-threonine. The protein is Serine hydroxymethyltransferase 1 of Mycobacterium tuberculosis (strain ATCC 25618 / H37Rv).